We begin with the raw amino-acid sequence, 508 residues long: UTP--glucose-1-phosphate uridylyltransferase (508 aa).

Serine 13 is subject to Phosphoserine. Residues 113–116 (LNGG), lysine 127, glutamine 190, and glycine 222 contribute to the UTP site. 115 to 116 (GG) contacts substrate. Position 127 (lysine 127) interacts with Mg(2+). Residues histidine 223 and 251-253 (NID) contribute to the substrate site. Positions 253 and 396 each coordinate UTP. Aspartate 253 serves as a coordination point for Mg(2+). Lysine 396 is a catalytic residue. A Phosphothreonine modification is found at threonine 426. Serine 434 is subject to Phosphoserine. Lysine 438 bears the N6-acetyllysine mark. Residues serine 448 and serine 461 each carry the phosphoserine modification. An oligomerization region spans residues 457 to 508 (HLTVSGDVTFGKNVSLKGTVIIIANHGDRIDIPPGAVLENKIVSGNLRILDH). A critical for end-to-end subunit interaction region spans residues 502 to 503 (NL).

The protein belongs to the UDPGP type 1 family. In terms of assembly, homooctamer.

The protein resides in the cytoplasm. The catalysed reaction is alpha-D-glucose 1-phosphate + UTP + H(+) = UDP-alpha-D-glucose + diphosphate. It functions in the pathway glycan biosynthesis; glycogen biosynthesis. In terms of biological role, UTP--glucose-1-phosphate uridylyltransferase catalyzing the conversion of glucose-1-phosphate into UDP-glucose, a crucial precursor for the production of glycogen. This chain is UTP--glucose-1-phosphate uridylyltransferase (UGP2), found in Cricetulus griseus (Chinese hamster).